Consider the following 341-residue polypeptide: Homeobox protein mls-2 (341 aa).

2 disordered regions span residues 1–78 (MPTS…DSTN) and 139–209 (SNPD…TVFS). Residues 64-78 (TTQSSPSASSEDSTN) are compositionally biased toward polar residues. Residues 153–166 (KDEKSEGKDGETRD) show a composition bias toward basic and acidic residues. A DNA-binding region (homeobox) is located at residues 201-260 (KKKTRTVFSRSQVSQLEMMFECKRYLSSQERSNLAQKLHLTETQVKIWFQNRRNKFKRQA).

Belongs to the HMX homeobox family. In terms of tissue distribution, expressed in a subset of head neurons, including AIM and ASK (at protein level).

It is found in the nucleus. Its function is as follows. Transcription factor that binds to the promoter of target genes. Regulates fate specification and/or differentiation of multiple cell types arising from the embryonic mesodermal (M) lineage and the ABp(l/r)paa precursors. In the postembryonic M lineage, regulates cleavage orientation, cell proliferation and cell fate specification. Regulates hlh-1 expression to specify coelomocyte fate in the mesodermal (M) lineage. In AWC neurons, initiates expression of ceh-36, leading to the expression of terminal differentiation genes. Regulates ventral cephalic sheath (CEPsh) glia differentiation and expression of transcription factor hlh-17 in CEPsh glia. Promotes terminal differentiation and morphogenesis of the epithelial duct and pore cells. In the duct cell, cooperates with the EGF-Ras-ERK pathway in turning on the terminal differentiation gene lin-48. The sequence is that of Homeobox protein mls-2 from Caenorhabditis elegans.